We begin with the raw amino-acid sequence, 550 residues long: Chaperonin GroEL (550 aa).

Residues 30-33 (TLGP), Lys-51, 87-91 (DGTTT), Gly-415, and Asp-496 each bind ATP.

This sequence belongs to the chaperonin (HSP60) family. As to quaternary structure, forms a cylinder of 14 subunits composed of two heptameric rings stacked back-to-back. Interacts with the co-chaperonin GroES.

It is found in the cytoplasm. The catalysed reaction is ATP + H2O + a folded polypeptide = ADP + phosphate + an unfolded polypeptide.. In terms of biological role, together with its co-chaperonin GroES, plays an essential role in assisting protein folding. The GroEL-GroES system forms a nano-cage that allows encapsulation of the non-native substrate proteins and provides a physical environment optimized to promote and accelerate protein folding. The chain is Chaperonin GroEL from Rickettsia typhi (strain ATCC VR-144 / Wilmington).